The chain runs to 163 residues: 2-C-methyl-D-erythritol 2,4-cyclodiphosphate synthase (163 aa).

D11 and H13 together coordinate a divalent metal cation. Residues 11 to 13 (DIH) and 37 to 38 (HS) each bind 4-CDP-2-C-methyl-D-erythritol 2-phosphate. H45 is an a divalent metal cation binding site. 4-CDP-2-C-methyl-D-erythritol 2-phosphate is bound by residues 59-61 (DIG), 64-68 (FSDTD), 103-109 (AQVPKMA), and R145.

It belongs to the IspF family. As to quaternary structure, homotrimer. A divalent metal cation serves as cofactor.

The enzyme catalyses 4-CDP-2-C-methyl-D-erythritol 2-phosphate = 2-C-methyl-D-erythritol 2,4-cyclic diphosphate + CMP. The protein operates within isoprenoid biosynthesis; isopentenyl diphosphate biosynthesis via DXP pathway; isopentenyl diphosphate from 1-deoxy-D-xylulose 5-phosphate: step 4/6. Its function is as follows. Involved in the biosynthesis of isopentenyl diphosphate (IPP) and dimethylallyl diphosphate (DMAPP), two major building blocks of isoprenoid compounds. Catalyzes the conversion of 4-diphosphocytidyl-2-C-methyl-D-erythritol 2-phosphate (CDP-ME2P) to 2-C-methyl-D-erythritol 2,4-cyclodiphosphate (ME-CPP) with a corresponding release of cytidine 5-monophosphate (CMP). This is 2-C-methyl-D-erythritol 2,4-cyclodiphosphate synthase from Nitrosomonas europaea (strain ATCC 19718 / CIP 103999 / KCTC 2705 / NBRC 14298).